The following is a 321-amino-acid chain: tRNA uridine(34) hydroxylase (321 aa).

One can recognise a Rhodanese domain in the interval S123–S217. The Cysteine persulfide intermediate role is filled by C177. Residues R294–K308 are compositionally biased toward basic and acidic residues. The tract at residues R294 to E321 is disordered.

This sequence belongs to the TrhO family.

It carries out the reaction uridine(34) in tRNA + AH2 + O2 = 5-hydroxyuridine(34) in tRNA + A + H2O. Its function is as follows. Catalyzes oxygen-dependent 5-hydroxyuridine (ho5U) modification at position 34 in tRNAs. The polypeptide is tRNA uridine(34) hydroxylase (Teredinibacter turnerae (strain ATCC 39867 / T7901)).